The primary structure comprises 160 residues: Anaerobic nitrite reductase MHB1 (160 aa).

In terms of domain architecture, Globin spans 8-157 (GFTEEQEALV…LVNAIKSEMK (150 aa)). The Homodimerization signature appears at 41-45 (EIAPS). Heme b-binding residues include S51, K65, H69, K99, and H104. The Homodimerization motif lies at 111–123 (DEHFEVTKFALLE).

This sequence belongs to the plant globin family. As to quaternary structure, homodimer. It depends on heme b as a cofactor. Root specific.

It is found in the nucleus matrix. The protein resides in the cytoplasm. The enzyme catalyses Fe(III)-heme b-[protein] + nitric oxide + H2O = Fe(II)-heme b-[protein] + nitrite + 2 H(+). In terms of biological role, phytoglobin that reduces nitrite to nitric oxide (NO) under anoxic conditions (e.g. during flooding or in waterlogged soil) and upon root nodulation. Required for general plant development and during nodulation, especially for the onset of symbiosis. Monitors nitric oxide (NO) levels during early phase of the nitrogen-fixing symbiosis and buffers oxygen in functioning nodules. May not function as an oxygen storage or transport protein. Has an unusually high affinity for O(2) through a hexacoordinate heme iron because of a very low dissociation constant. This is Anaerobic nitrite reductase MHB1 from Medicago sativa (Alfalfa).